The following is a 103-amino-acid chain: Large ribosomal subunit protein bL21 (103 aa).

This sequence belongs to the bacterial ribosomal protein bL21 family. As to quaternary structure, part of the 50S ribosomal subunit. Contacts protein L20.

Functionally, this protein binds to 23S rRNA in the presence of protein L20. This Idiomarina loihiensis (strain ATCC BAA-735 / DSM 15497 / L2-TR) protein is Large ribosomal subunit protein bL21.